A 540-amino-acid chain; its full sequence is Probable protein kinase UbiB (540 aa).

Residues Leu24–Trp44 traverse the membrane as a helical segment. The region spanning Arg126–Leu494 is the Protein kinase domain. ATP contacts are provided by residues Leu132 to Val140 and Lys154. Catalysis depends on Asp289, which acts as the Proton acceptor. 2 helical membrane passes run Leu496–Ala516 and Leu518–Val538.

It belongs to the ABC1 family. UbiB subfamily.

The protein resides in the cell inner membrane. It functions in the pathway cofactor biosynthesis; ubiquinone biosynthesis [regulation]. Functionally, is probably a protein kinase regulator of UbiI activity which is involved in aerobic coenzyme Q (ubiquinone) biosynthesis. This Pseudomonas putida (strain GB-1) protein is Probable protein kinase UbiB.